The following is a 441-amino-acid chain: Ribulose bisphosphate carboxylase large chain (441 aa).

An N6,N6,N6-trimethyllysine modification is found at lysine 5. The substrate site is built by asparagine 114 and threonine 164. Catalysis depends on lysine 166, which acts as the Proton acceptor. Residue lysine 168 coordinates substrate. Mg(2+) contacts are provided by lysine 192, aspartate 194, and glutamate 195. Lysine 192 carries the N6-carboxylysine modification. Histidine 285 serves as the catalytic Proton acceptor. Arginine 286, histidine 318, and serine 370 together coordinate substrate.

This sequence belongs to the RuBisCO large chain family. Type I subfamily. As to quaternary structure, heterohexadecamer of 8 large chains and 8 small chains; disulfide-linked. The disulfide link is formed within the large subunit homodimers. It depends on Mg(2+) as a cofactor. Post-translationally, the disulfide bond which can form in the large chain dimeric partners within the hexadecamer appears to be associated with oxidative stress and protein turnover.

It localises to the plastid. The protein localises to the chloroplast. The catalysed reaction is 2 (2R)-3-phosphoglycerate + 2 H(+) = D-ribulose 1,5-bisphosphate + CO2 + H2O. It carries out the reaction D-ribulose 1,5-bisphosphate + O2 = 2-phosphoglycolate + (2R)-3-phosphoglycerate + 2 H(+). Functionally, ruBisCO catalyzes two reactions: the carboxylation of D-ribulose 1,5-bisphosphate, the primary event in carbon dioxide fixation, as well as the oxidative fragmentation of the pentose substrate in the photorespiration process. Both reactions occur simultaneously and in competition at the same active site. The polypeptide is Ribulose bisphosphate carboxylase large chain (Argyrochosma delicatula (Delicate cloak fern)).